Reading from the N-terminus, the 1004-residue chain is 2-oxoglutarate dehydrogenase E1 component (1004 aa).

It belongs to the alpha-ketoglutarate dehydrogenase family. Homodimer. Part of the 2-oxoglutarate dehydrogenase (OGDH) complex composed of E1 (2-oxoglutarate dehydrogenase), E2 (dihydrolipoamide succinyltransferase) and E3 (dihydrolipoamide dehydrogenase); the complex contains multiple copies of the three enzymatic components (E1, E2 and E3). The cofactor is thiamine diphosphate.

The enzyme catalyses N(6)-[(R)-lipoyl]-L-lysyl-[protein] + 2-oxoglutarate + H(+) = N(6)-[(R)-S(8)-succinyldihydrolipoyl]-L-lysyl-[protein] + CO2. Its function is as follows. E1 component of the 2-oxoglutarate dehydrogenase (OGDH) complex which catalyzes the decarboxylation of 2-oxoglutarate, the first step in the conversion of 2-oxoglutarate to succinyl-CoA and CO(2). The protein is 2-oxoglutarate dehydrogenase E1 component of Brucella suis biovar 1 (strain 1330).